The chain runs to 396 residues: Elongation factor Tu (396 aa).

In terms of domain architecture, tr-type G spans 10 to 206; the sequence is KPHVNVGTIG…ALDTYIPLPE (197 aa). Positions 19-26 are G1; sequence GHVDHGKT. 19–26 provides a ligand contact to GTP; the sequence is GHVDHGKT. T26 contributes to the Mg(2+) binding site. The segment at 60–64 is G2; sequence GITIN. The interval 81-84 is G3; that stretch reads DCPG. GTP-binding positions include 81-85 and 136-139; these read DCPGH and NKCD. Positions 136 to 139 are G4; that stretch reads NKCD. The interval 174-176 is G5; sequence SAK.

This sequence belongs to the TRAFAC class translation factor GTPase superfamily. Classic translation factor GTPase family. EF-Tu/EF-1A subfamily. As to quaternary structure, monomer.

It is found in the cytoplasm. The catalysed reaction is GTP + H2O = GDP + phosphate + H(+). In terms of biological role, GTP hydrolase that promotes the GTP-dependent binding of aminoacyl-tRNA to the A-site of ribosomes during protein biosynthesis. The chain is Elongation factor Tu from Polaromonas sp. (strain JS666 / ATCC BAA-500).